Consider the following 345-residue polypeptide: Ananain (345 aa).

The first 24 residues, 1–24 (MTSKVQLVFLFLFLCVMWASPSAA), serve as a signal peptide directing secretion. Residues 25–122 (SCDEPSDPMM…VSFDDVDISS (98 aa)) constitute a propeptide, activation peptide. Intrachain disulfides connect C144-C184, C178-C217, and C273-C325. C147 is a catalytic residue. C147 serves as a coordination point for E64. Active-site residues include H279 and N300.

As to expression, stem (at protein level).

The catalysed reaction is Hydrolysis of proteins with broad specificity for peptide bonds. Best reported small molecule substrate Bz-Phe-Val-Arg-|-NHMec, but broader specificity than fruit bromelain.. Strongly inhibited by chicken egg-white cystatin. Inhibited by iodoacetamide and the active-site-directed inhibitor E64 (L-trans-epoxysuccinyl-leucylamide-(4-guanido)-butane). Its function is as follows. Cysteine protease. Displays a high level of diversity in substrate specificity at the P1-P1' cleavage site. A hydrophilic P1 residue is preferred, with Gln or Arg strongly preferred. Favors an Ile/Leu residue at the P2 position of substrates, with an overall higher preference for Leu. The optimal tripeptide for cleavage is Pro-Leu-Gln, with cleavage occurring after the Gln residue. Another optimal tripeptide is Val-Leu-Arg, which may imply that a hydrophobic residue at the P3 position of substrates is preferred. In Ananas comosus (Pineapple), this protein is Ananain.